The following is a 195-amino-acid chain: dCTP deaminase (195 aa).

DCTP contacts are provided by residues 105-110, aspartate 123, 131-133, glutamine 152, tyrosine 166, lysine 173, and glutamine 177; these read RSSLGR and TLE. The active-site Proton donor/acceptor is glutamate 133. Residues 159 to 195 are disordered; the sequence is KTPADRPYGAERGSKYQGQSGPQASKIQGDREFGGDQ. Basic and acidic residues predominate over residues 160-172; that stretch reads TPADRPYGAERGS. The segment covering 174-184 has biased composition (polar residues); sequence YQGQSGPQASK. Basic and acidic residues predominate over residues 186–195; the sequence is QGDREFGGDQ.

Belongs to the dCTP deaminase family. Homotrimer.

It catalyses the reaction dCTP + H2O + H(+) = dUTP + NH4(+). It participates in pyrimidine metabolism; dUMP biosynthesis; dUMP from dCTP (dUTP route): step 1/2. Catalyzes the deamination of dCTP to dUTP. The protein is dCTP deaminase of Haloarcula marismortui (strain ATCC 43049 / DSM 3752 / JCM 8966 / VKM B-1809) (Halobacterium marismortui).